The following is a 76-amino-acid chain: SAGKFIVIFKNDVSEDKIRETKDEVIAEGGTITNEYNMPGMKGFAGELTPQSLTKFQGLQGDLIDSIEEDGIVTTQ.

N-acetylserine is present on serine 1.

Belongs to the protease inhibitor I9 family.

Its function is as follows. Specifically inhibits an endogenous intracellular serine proteinase (proteinase A). In Pleurotus ostreatus (Oyster mushroom), this protein is Serine proteinase inhibitor IA-1.